The sequence spans 103 residues: Putative protein YmfH (103 aa).

Residues 1 to 34 form a disordered region; that stretch reads MVNAAQRTRVKVEADNRPSVDTHPPGVQPSPGTG. Over residues 10–20 the composition is skewed to basic and acidic residues; that stretch reads VKVEADNRPSV. Transmembrane regions (helical) follow at residues 42 to 62 and 73 to 93; these read MLCV…TALF and GLIT…CFVE.

It is found in the cell inner membrane. This Escherichia coli (strain K12) protein is Putative protein YmfH (ymfH).